Here is a 651-residue protein sequence, read N- to C-terminus: p-hydroxybenzoic acid efflux pump subunit AaeB (651 aa).

The next 11 helical transmembrane spans lie at 11-31, 41-61, 67-87, 91-111, 119-139, 150-170, 368-388, 405-425, 429-449, 455-475, and 481-501; these read FAFK…HLQL, AAIV…SGAI, LRII…VLTI, VLTL…SSLV, FGLA…TPLL, EIVL…PRSI, LFWL…IAVV, FLVG…FIIP, QSML…GIEV, GSLG…PMIF, and LDSA…LLLI.

It belongs to the aromatic acid exporter ArAE (TC 2.A.85) family.

Its subcellular location is the cell inner membrane. Functionally, forms an efflux pump with AaeA. Could function as a metabolic relief valve, allowing to eliminate certain compounds when they accumulate to high levels in the cell. The polypeptide is p-hydroxybenzoic acid efflux pump subunit AaeB (Yersinia pseudotuberculosis serotype O:1b (strain IP 31758)).